Reading from the N-terminus, the 984-residue chain is Probable serine/threonine-protein kinase ireA (984 aa).

Positions 1–26 (MTFSKTRNKIIFLLFLIIINIFNINA) are cleaved as a signal peptide. The Extracellular segment spans residues 27–436 (YIKDENEDDL…NDLLDSNKLK (410 aa)). 2 disordered regions span residues 70 to 91 (YSTS…EITK) and 137 to 157 (EDKS…DENK). 2 stretches are compositionally biased toward low complexity: residues 82 to 91 (STSTSTEITK) and 141 to 150 (STSSTSTTSE). The N-linked (GlcNAc...) asparagine glycan is linked to Asn228. Positions 352–427 (SPPSNNNNNN…GANNNNNNNN (76 aa)) are disordered. Residues 356-397 (NNNNNNNNNNNNNNNNNNNNNNNNNNNNNNNNNNKNNNNNNK) show a composition bias toward low complexity. The N-linked (GlcNAc...) asparagine glycan is linked to Asn398. A helical membrane pass occupies residues 437–457 (NYDIYLYSSIVILITSIIVFI). Residues 458-984 (RSKKNFNLIN…NDQYFVQYYY (527 aa)) are Cytoplasmic-facing. A coiled-coil region spans residues 467 to 533 (NVNNNNNQNN…NDLIDEFIST (67 aa)). Residues 472 to 489 (NNQNNNQNSNQNNNINNK) show a composition bias toward low complexity. Residues 472 to 518 (NNQNNNQNSNQNNNINNKKTPKKKKKKQKNKNNKNNNDEDDENEIEN) form a disordered region. Residues 490 to 503 (KTPKKKKKKQKNKN) show a composition bias toward basic residues. The span at 509–518 (DEDDENEIEN) shows a compositional bias: acidic residues. The Protein kinase domain occupies 575-851 (IITNKILGTG…IGECINHPFF (277 aa)). Residues 581–589 (LGTGSCGTI) and Lys603 contribute to the ATP site. Positions 667–676 (PTDSPSIQSS) are enriched in polar residues. Residues 667–692 (PTDSPSIQSSNNNGNGNNGNNNNNNQ) form a disordered region. The segment covering 677 to 691 (NNNGNGNNGNNNNNN) has biased composition (low complexity). The active-site Proton acceptor is the Asp722. The KEN domain occupies 854–984 (VHKKLSFLVA…NDQYFVQYYY (131 aa)).

It belongs to the protein kinase superfamily. Ser/Thr protein kinase family.

The protein localises to the membrane. It catalyses the reaction L-seryl-[protein] + ATP = O-phospho-L-seryl-[protein] + ADP + H(+). The enzyme catalyses L-threonyl-[protein] + ATP = O-phospho-L-threonyl-[protein] + ADP + H(+). This is Probable serine/threonine-protein kinase ireA (ireA) from Dictyostelium discoideum (Social amoeba).